The primary structure comprises 94 residues: MATQKFSYFLLVLLMVFALILPSIISVEVIPCIAGSKCTNDMTYNELCRFKGFSKGGFCQKYVHQTIGRCCCHPTGLESQESSISGDTNVVITN.

Residues 1-26 form the signal peptide; the sequence is MATQKFSYFLLVLLMVFALILPSIIS. 3 disulfide bridges follow: C32–C72, C38–C59, and C48–C71.

Belongs to the DEFL family.

It localises to the secreted. This chain is Putative defensin-like protein 88, found in Arabidopsis thaliana (Mouse-ear cress).